The chain runs to 265 residues: Glutamate racemase (265 aa).

Substrate is bound by residues 7-8 (DS) and 39-40 (YG). Cysteine 70 acts as the Proton donor/acceptor in catalysis. 71 to 72 (NT) is a binding site for substrate. Residue cysteine 177 is the Proton donor/acceptor of the active site.

The protein belongs to the aspartate/glutamate racemases family.

It carries out the reaction L-glutamate = D-glutamate. It functions in the pathway cell wall biogenesis; peptidoglycan biosynthesis. Functionally, provides the (R)-glutamate required for cell wall biosynthesis. The protein is Glutamate racemase of Prochlorococcus marinus (strain NATL2A).